A 1179-amino-acid chain; its full sequence is RecBCD enzyme subunit RecB (1179 aa).

Positions 1–859 (MVYSDTKTSK…IIQNGKCMNY (859 aa)) are DNA-binding and helicase activity, interacts with RecC. The UvrD-like helicase ATP-binding domain maps to 18 to 459 (NIMKKKLNIF…YYLDTNWRSS (442 aa)). Residue 39–46 (ASAGTGKT) coordinates ATP. Residues 485 to 755 (EPILSSSKNL…RIITIHKSKG (271 aa)) enclose the UvrD-like helicase C-terminal domain. The nuclease activity, interacts with RecD and RecA stretch occupies residues 910 to 1179 (YSQITSFTKI…KLTKLILQKK (270 aa)). Mg(2+)-binding residues include His-962, Asp-1073, and Asp-1086. Asp-1086 (for nuclease activity) is an active-site residue.

The protein belongs to the helicase family. UvrD subfamily. In terms of assembly, heterotrimer of RecB, RecC and RecD. All subunits contribute to DNA-binding. Interacts with RecA. Mg(2+) serves as cofactor.

The enzyme catalyses Exonucleolytic cleavage (in the presence of ATP) in either 5'- to 3'- or 3'- to 5'-direction to yield 5'-phosphooligonucleotides.. It catalyses the reaction Couples ATP hydrolysis with the unwinding of duplex DNA by translocating in the 3'-5' direction.. It carries out the reaction ATP + H2O = ADP + phosphate + H(+). A helicase/nuclease that prepares dsDNA breaks (DSB) for recombinational DNA repair. Binds to DSBs and unwinds DNA via a highly rapid and processive ATP-dependent bidirectional helicase activity. Unwinds dsDNA until it encounters a Chi (crossover hotspot instigator) sequence from the 3' direction. Cuts ssDNA a few nucleotides 3' to the Chi site. The properties and activities of the enzyme are changed at Chi. The Chi-altered holoenzyme produces a long 3'-ssDNA overhang and facilitates RecA-binding to the ssDNA for homologous DNA recombination and repair. Holoenzyme degrades any linearized DNA that is unable to undergo homologous recombination. In the holoenzyme this subunit contributes ATPase, 3'-5' helicase, exonuclease activity and loads RecA onto ssDNA. This chain is RecBCD enzyme subunit RecB, found in Buchnera aphidicola subsp. Schizaphis graminum (strain Sg).